The primary structure comprises 451 residues: Phosphoglucosamine mutase (451 aa).

Serine 102 functions as the Phosphoserine intermediate in the catalytic mechanism. 4 residues coordinate Mg(2+): serine 102, aspartate 242, aspartate 244, and aspartate 246. Serine 102 is subject to Phosphoserine.

This sequence belongs to the phosphohexose mutase family. Mg(2+) serves as cofactor. Post-translationally, activated by phosphorylation.

It catalyses the reaction alpha-D-glucosamine 1-phosphate = D-glucosamine 6-phosphate. In terms of biological role, catalyzes the conversion of glucosamine-6-phosphate to glucosamine-1-phosphate. The polypeptide is Phosphoglucosamine mutase (Staphylococcus aureus (strain Mu3 / ATCC 700698)).